We begin with the raw amino-acid sequence, 124 residues long: Small ribosomal subunit protein uS12 (124 aa).

Asp-89 is modified (3-methylthioaspartic acid).

The protein belongs to the universal ribosomal protein uS12 family. Part of the 30S ribosomal subunit. Contacts proteins S8 and S17. May interact with IF1 in the 30S initiation complex.

Functionally, with S4 and S5 plays an important role in translational accuracy. Interacts with and stabilizes bases of the 16S rRNA that are involved in tRNA selection in the A site and with the mRNA backbone. Located at the interface of the 30S and 50S subunits, it traverses the body of the 30S subunit contacting proteins on the other side and probably holding the rRNA structure together. The combined cluster of proteins S8, S12 and S17 appears to hold together the shoulder and platform of the 30S subunit. The chain is Small ribosomal subunit protein uS12 from Hydrogenovibrio crunogenus (strain DSM 25203 / XCL-2) (Thiomicrospira crunogena).